The sequence spans 245 residues: Endogenous retrovirus group K member 5 Env polyprotein (245 aa).

The interval 1 to 245 (MVTPVTWMDN…TLEFGLEIKL (245 aa)) is truncated surface protein.

The protein belongs to the beta type-B retroviral envelope protein family. HERV class-II K(HML-2) env subfamily. As to expression, expressed in lung, placenta, testis, peripheral blood lymphocytes, and teratocarcinoma cell lines.

It is found in the virion. Retroviral envelope proteins mediate receptor recognition and membrane fusion during early infection. Endogenous envelope proteins may have kept, lost or modified their original function during evolution. This chain is Endogenous retrovirus group K member 5 Env polyprotein (ERVK-5), found in Homo sapiens (Human).